A 161-amino-acid polypeptide reads, in one-letter code: Pro-corazonin (161 aa).

Residues 1–20 (MMRLLLLPLFLFTLSMACMG) form the signal peptide. Glutamine 21 carries the pyrrolidone carboxylic acid modification. An Asparagine amide modification is found at asparagine 31. Positions 70-161 (LERCLAQLQR…SGEPSVFGKH (92 aa)) are excised as a propeptide. 2 disordered regions span residues 93 to 125 (NANRPEPDSSDSGSSRNRANNNNENVLYPTPIQ) and 142 to 161 (VAGSGPTGAGSGEPSVFGKH). Positions 102-117 (SDSGSSRNRANNNNEN) are enriched in low complexity.

The protein belongs to the corazonin family.

Its subcellular location is the secreted. Cardioactive peptide. Corazonin is probably involved in the physiological regulation of the heart beat. Clock (Clk) and cycle (cyc) proteins negatively regulate Crz transcription in a cell-specific manner. The protein is Pro-corazonin of Drosophila pseudoobscura pseudoobscura (Fruit fly).